The chain runs to 285 residues: Secreted RxLR effector protein 106 (285 aa).

Residues 1-24 (MSVRYAGLLLAAVAVSAHINEVNS) form the signal peptide. The short motif at 42 to 54 (RDLRSADNGNEER) is the RxLR-dEER element. Residues Asn-182 and Asn-187 are each glycosylated (N-linked (GlcNAc...) asparagine). The segment covering 220 to 229 (IEGDKEKKGG) has biased composition (basic and acidic residues). A disordered region spans residues 220-262 (IEGDKEKKGGPDYVEGTESRGKKRGQTEAPDLEPGLTPKQKRL). The short motif at 239–264 (RGKKRGQTEAPDLEPGLTPKQKRLKR) is the Bipartite nuclear localization signal element.

It belongs to the RxLR effector family. As to quaternary structure, interacts with host RCD1 and SRO1 transcription co-regulators.

It localises to the secreted. The protein resides in the host nucleus. Its function is as follows. Secreted effector that suppresses pathogen-associated molecular pattern (PAMP)-triggered immunity (PTI) in host plants. Binds to RCD1 and SRO1 transcription co-regulators to attenuate transcriptional activation of salicylic acid (SA)-induced defense genes and alters plant growth responses to light. Suppresses SA signal transduction but not SA levels. The polypeptide is Secreted RxLR effector protein 106 (Hyaloperonospora arabidopsidis (strain Emoy2) (Downy mildew agent)).